We begin with the raw amino-acid sequence, 358 residues long: Uroporphyrinogen decarboxylase (358 aa).

Substrate contacts are provided by residues 29 to 33 (RQAGR), aspartate 79, tyrosine 156, threonine 211, and histidine 329.

The protein belongs to the uroporphyrinogen decarboxylase family. Homodimer.

It localises to the cytoplasm. The catalysed reaction is uroporphyrinogen III + 4 H(+) = coproporphyrinogen III + 4 CO2. It participates in porphyrin-containing compound metabolism; protoporphyrin-IX biosynthesis; coproporphyrinogen-III from 5-aminolevulinate: step 4/4. Catalyzes the decarboxylation of four acetate groups of uroporphyrinogen-III to yield coproporphyrinogen-III. This chain is Uroporphyrinogen decarboxylase, found in Idiomarina loihiensis (strain ATCC BAA-735 / DSM 15497 / L2-TR).